We begin with the raw amino-acid sequence, 811 residues long: DEP domain-containing protein 1A (811 aa).

The region spanning 24-108 (FRAGMPLRKH…DNNQLFRFPA (85 aa)) is the DEP domain. One can recognise a Rho-GAP domain in the interval 281–321 (DYFLDLPEPLLTFEYYELFVNILVVCGYITVSDRSSGIHKI). A Phosphoserine modification is found at S512. Positions 598 to 653 (AIDALQLCCLLLPPPNRRKLQLLMRMISRMSQNVDMPKLHDAMGTRSLMIHTFSRC) are interaction with ZNF224.

As to quaternary structure, isoform 2 and isoform 5 can form homodimers and heterodimers. Interacts with ZNF224. As to expression, expressed in testis. Up-regulated in bladder cancer cells (at protein level).

The protein resides in the nucleus. In terms of biological role, may be involved in transcriptional regulation as a transcriptional corepressor. The DEPDC1A-ZNF224 complex may play a critical role in bladder carcinogenesis by repressing the transcription of the A20 gene, leading to transport of NF-KB protein into the nucleus, resulting in suppression of apoptosis of bladder cancer cells. The chain is DEP domain-containing protein 1A (DEPDC1) from Homo sapiens (Human).